Consider the following 200-residue polypeptide: uncharacterized protein (200 aa).

Residues Met1–Lys191 enclose the AMMECR1 domain.

This is an uncharacterized protein from Caenorhabditis elegans.